Consider the following 561-residue polypeptide: Dihydroxy-acid dehydratase (561 aa).

Cysteine 51 contacts [2Fe-2S] cluster. Aspartate 83 lines the Mg(2+) pocket. Cysteine 124 lines the [2Fe-2S] cluster pocket. Mg(2+)-binding residues include aspartate 125 and lysine 126. The residue at position 126 (lysine 126) is an N6-carboxylysine. [2Fe-2S] cluster is bound at residue cysteine 196. Glutamate 448 provides a ligand contact to Mg(2+). Serine 473 serves as the catalytic Proton acceptor.

This sequence belongs to the IlvD/Edd family. As to quaternary structure, homodimer. It depends on [2Fe-2S] cluster as a cofactor. Mg(2+) serves as cofactor.

It carries out the reaction (2R)-2,3-dihydroxy-3-methylbutanoate = 3-methyl-2-oxobutanoate + H2O. The catalysed reaction is (2R,3R)-2,3-dihydroxy-3-methylpentanoate = (S)-3-methyl-2-oxopentanoate + H2O. It functions in the pathway amino-acid biosynthesis; L-isoleucine biosynthesis; L-isoleucine from 2-oxobutanoate: step 3/4. The protein operates within amino-acid biosynthesis; L-valine biosynthesis; L-valine from pyruvate: step 3/4. Functionally, functions in the biosynthesis of branched-chain amino acids. Catalyzes the dehydration of (2R,3R)-2,3-dihydroxy-3-methylpentanoate (2,3-dihydroxy-3-methylvalerate) into 2-oxo-3-methylpentanoate (2-oxo-3-methylvalerate) and of (2R)-2,3-dihydroxy-3-methylbutanoate (2,3-dihydroxyisovalerate) into 2-oxo-3-methylbutanoate (2-oxoisovalerate), the penultimate precursor to L-isoleucine and L-valine, respectively. The polypeptide is Dihydroxy-acid dehydratase (Sulfolobus acidocaldarius (strain ATCC 33909 / DSM 639 / JCM 8929 / NBRC 15157 / NCIMB 11770)).